The chain runs to 227 residues: Ribose-5-phosphate isomerase A (227 aa).

Substrate is bound by residues 26–29 (TGST), 82–85 (DGAD), and 95–98 (KGGG). The active-site Proton acceptor is the glutamate 104. A substrate-binding site is contributed by lysine 122.

Belongs to the ribose 5-phosphate isomerase family. As to quaternary structure, homodimer.

It carries out the reaction aldehydo-D-ribose 5-phosphate = D-ribulose 5-phosphate. Its pathway is carbohydrate degradation; pentose phosphate pathway; D-ribose 5-phosphate from D-ribulose 5-phosphate (non-oxidative stage): step 1/1. Catalyzes the reversible conversion of ribose-5-phosphate to ribulose 5-phosphate. The chain is Ribose-5-phosphate isomerase A from Streptococcus equi subsp. zooepidemicus (strain H70).